We begin with the raw amino-acid sequence, 261 residues long: Protein FAM78B (261 aa).

This sequence belongs to the FAM78 family.

The polypeptide is Protein FAM78B (FAM78B) (Homo sapiens (Human)).